The primary structure comprises 434 residues: D-amino acid dehydrogenase (434 aa).

Residue 3–17 coordinates FAD; the sequence is VLVLGSGVIGTASAY.

The protein belongs to the DadA oxidoreductase family. The cofactor is FAD.

It catalyses the reaction a D-alpha-amino acid + A + H2O = a 2-oxocarboxylate + AH2 + NH4(+). Its pathway is amino-acid degradation; D-alanine degradation; NH(3) and pyruvate from D-alanine: step 1/1. In terms of biological role, oxidative deamination of D-amino acids. This is D-amino acid dehydrogenase from Pseudomonas putida (strain ATCC 700007 / DSM 6899 / JCM 31910 / BCRC 17059 / LMG 24140 / F1).